The chain runs to 351 residues: GTP 3',8-cyclase (351 aa).

The region spanning 29–254 (RFGRVARDLR…EHGREDPSAP (226 aa)) is the Radical SAM core domain. R38 serves as a coordination point for GTP. C45 and C49 together coordinate [4Fe-4S] cluster. Y51 provides a ligand contact to S-adenosyl-L-methionine. Position 52 (C52) interacts with [4Fe-4S] cluster. R89 is a binding site for GTP. S-adenosyl-L-methionine is bound at residue G93. T120 provides a ligand contact to GTP. S144 lines the S-adenosyl-L-methionine pocket. K181 is a GTP binding site. M214 is a binding site for S-adenosyl-L-methionine. Positions 278 and 281 each coordinate [4Fe-4S] cluster. 283–285 (RTR) contributes to the GTP binding site. Residue C295 participates in [4Fe-4S] cluster binding.

It belongs to the radical SAM superfamily. MoaA family. Monomer and homodimer. Requires [4Fe-4S] cluster as cofactor.

It carries out the reaction GTP + AH2 + S-adenosyl-L-methionine = (8S)-3',8-cyclo-7,8-dihydroguanosine 5'-triphosphate + 5'-deoxyadenosine + L-methionine + A + H(+). The protein operates within cofactor biosynthesis; molybdopterin biosynthesis. Catalyzes the cyclization of GTP to (8S)-3',8-cyclo-7,8-dihydroguanosine 5'-triphosphate. The chain is GTP 3',8-cyclase from Rhodococcus opacus (strain B4).